The following is a 227-amino-acid chain: MLLTIDDVLTQEELAIARSMLARSAWVSGLVTAGTQAAQVKNNQQVQENDPQIVNLRRLVLGALNRNALFFTATLPEKIVPPFFNRYSGETNHYGFHVDNAMRLLPDGSGYVRTDVSATLFLSDPQEYDGGELVINDTFGQHGVKLQAGSMVIYPSSSIHQVTPVTRGERLACFMFIQSMVRNPDQRRLLYEMDMALLQLRQNIGETPAVVSLTGTYHNLLRQWADS.

A Fe2OG dioxygenase domain is found at 78-179 (KIVPPFFNRY…RLACFMFIQS (102 aa)). Residues His-97, Asp-99, and His-160 each coordinate Fe cation. Residue Arg-170 participates in 2-oxoglutarate binding.

Fe(2+) is required as a cofactor. Requires L-ascorbate as cofactor.

The chain is PKHD-type hydroxylase NE2125 from Nitrosomonas europaea (strain ATCC 19718 / CIP 103999 / KCTC 2705 / NBRC 14298).